Reading from the N-terminus, the 295-residue chain is Perivine-Nbeta-methyltransferase (295 aa).

Residues 76 to 85 (ILDVGCGKGG) form an SAM motif I region. The Vacuolar targeting signal motif lies at 138-144 (DGSFELI). The tract at residues 139–147 (GSFELIFVI) is SAM motif II. The SAM motif III stretch occupies residues 166 to 175 (VAAPGAQIVI).

The protein belongs to the class I-like SAM-binding methyltransferase superfamily. gTMT family. As to quaternary structure, homodimer. In terms of tissue distribution, mainly expressed in young leaves, and, to a lower extent, in mature leaves, flowers, stems and roots (at protein level). Transcripts levels are highest in flowers, moderate in leaves and low in roots and stems.

Its subcellular location is the vacuole membrane. It catalyses the reaction perivine + S-adenosyl-L-methionine = vobasine + S-adenosyl-L-homocysteine + 2 H(+). Its pathway is alkaloid biosynthesis; vindoline biosynthesis. Its function is as follows. S-adenosyl-L-methionine-dependent N-methyltransferase involved in the biosynthesis of biologically active monoterpenoid indole alkaloids (MIAs) natural products including vindoline. Catalyzes the conversion of perivine to Nbeta-methylperivine (vobasine) by methylating its N4 nitrogen. Inactive with picrinine as substrate. The sequence is that of Perivine-Nbeta-methyltransferase from Catharanthus roseus (Madagascar periwinkle).